A 169-amino-acid polypeptide reads, in one-letter code: 4-hydroxylaminobenzoate lyase (169 aa).

Belongs to the PnbB family.

It carries out the reaction 4-hydroxylaminobenzoate + H2O + H(+) = 3,4-dihydroxybenzoate + NH4(+). Functionally, lyase involved in the degradation of nitroaromatic compounds. Catalyzes the conversion of 4-hydroxylaminobenzoate to 3,4-dihydroxybenzoate (protocatechuate). The sequence is that of 4-hydroxylaminobenzoate lyase from Nocardioides sp. (strain LMS-CY).